We begin with the raw amino-acid sequence, 561 residues long: Methyl-accepting chemotaxis protein CtpM (561 aa).

Over 1–11 the chain is Cytoplasmic; that stretch reads MMRLTLKSKVL. Residues 12–32 form a helical membrane-spanning segment; that stretch reads LLAMVPVLLFALVLSGGAVLI. Topologically, residues 33–205 are periplasmic; that stretch reads LKKQADAEVK…KQDIDERIGT (173 aa). A helical membrane pass occupies residues 206–226; sequence LIASIVGIAGVLLVVLLVIGL. The Cytoplasmic segment spans residues 227 to 561; that stretch reads AVANAMLRPL…LGRLVGQFRI (335 aa). Residues 230–284 enclose the HAMP domain; the sequence is NAMLRPLHQIRQNLDDIAAGEGDLTRRLPVTSYDELGELAGSFNRFVEKIHGLVR. One can recognise a Methyl-accepting transducer domain in the interval 289–525; that stretch reads MTGDLKQLVE…EINRSVHQIA (237 aa). The disordered stretch occupies residues 333–357; sequence HEVAQSAQRAAEAAQQTDHEGQAAK. The segment covering 336–348 has biased composition (low complexity); the sequence is AQSAQRAAEAAQQ.

The protein belongs to the methyl-accepting chemotaxis (MCP) protein family. In terms of assembly, homodimer. The ligand-binding domain (LBD) is dimeric in the presence and the absence of ligands.

Its subcellular location is the cell inner membrane. In terms of biological role, chemotactic-signal transducers respond to changes in the concentration of attractants and repellents in the environment, transduce a signal from the outside to the inside of the cell, and facilitate sensory adaptation through the variation of the level of methylation. Directly recognizes five C4-dicarboxylic acids: L-malic, citramalic, citraconic, bromosuccinic and methylsuccinic acids. Three of the identified ligands act as chemoattractants (L-malic, D,L-bromosuccinic and L-citramalic acids) whereas two of them (L-methylsuccinic and citraconic acids) behave as antagonists by inhibiting the downstream chemotaxis signaling cascade. Antagonists compete with chemoattractants, thereby decreasing the affinity for chemoattractants and the subsequent chemotactic response. Acts through the che chemosensory pathway. The protein is Methyl-accepting chemotaxis protein CtpM of Pseudomonas aeruginosa (strain ATCC 15692 / DSM 22644 / CIP 104116 / JCM 14847 / LMG 12228 / 1C / PRS 101 / PAO1).